The following is a 322-amino-acid chain: Phthalate dioxygenase reductase (322 aa).

Residues 7-109 (DGFLRLKIAS…SLPRNEFPLD (103 aa)) enclose the FAD-binding FR-type domain. Residues 56–57 (RT), 73–75 (AVK), 81–84 (RGGS), threonine 125, and phenylalanine 226 contribute to the FMN site. The region spanning 239-322 (FTVRLSRSGT…AKSAELVLDL (84 aa)) is the 2Fe-2S ferredoxin-type domain. [2Fe-2S] cluster is bound at residue cysteine 273. Serine 275 serves as a coordination point for FMN. Cysteine 278, cysteine 281, and cysteine 309 together coordinate [2Fe-2S] cluster.

This sequence belongs to the PDR/VanB family. As to quaternary structure, monomer. The cofactor is FMN.

Component of the electron transfer chain involved in pyridine nucleotide-dependent dihydroxylation of phthalate. Utilizes FMN to mediate electron transfer from the two-electron donor, NADH, to the one-electron acceptor, (2Fe-2S). This chain is Phthalate dioxygenase reductase (ophA1), found in Burkholderia cepacia (Pseudomonas cepacia).